The chain runs to 200 residues: BmK-YA precursor (200 aa).

An N-terminal signal peptide occupies residues 1–23 (MIFHQFYSILILCLIFPNQVVQS). The propeptide occupies 24 to 34 (DKERQDWIPSD). A disordered region spans residues 30–200 (WIPSDYGGYM…GYMNPAGRSD (171 aa)). A42 is modified (alanine amide). The propeptide occupies 45–100 (SDEERQDWIPSDYGGHMNPAGRSDEERQDWIPSDYGGHMNPAGRSNEERQDWIPSD). An Alanine amide modification is found at A108. A propeptide spanning residues 111–144 (SDEERQDWIPSDYGGHMNPAGRSNEERQDWIPSD) is cleaved from the precursor. A152 is modified (alanine amide). Positions 155–188 (SDEERQDWIPSDYGGHMNPAGRSDEERQDWIPSD) are excised as a propeptide. Alanine amide is present on A196. A propeptide spanning residues 199-200 (SD) is cleaved from the precursor.

Venom gland.

The protein localises to the secreted. In terms of biological role, synthetic BmK-YA activates human opioid receptors in vitro, with highest activity on the delta-type/OPRD1 receptor (EC(50)=2.5 uM) and lower activity on mu-type/OPRM1 and kappa-type/OPRK1 receptors (EC(50)=17 uM and 30 uM, respectively). This Olivierus martensii (Manchurian scorpion) protein is BmK-YA precursor.